The chain runs to 238 residues: Succinate dehydrogenase assembly factor 2, mitochondrial (238 aa).

Positions 47 to 82 are disordered; it reads GLKADGSRADQAEAGASQSLDKQSRTLDSVRDDTLS. Residues 68–80 are compositionally biased toward basic and acidic residues; the sequence is KQSRTLDSVRDDT.

Belongs to the SDHAF2 family. Interacts with the flavoprotein subunit within the SDH catalytic dimer.

Its subcellular location is the mitochondrion matrix. Its function is as follows. Plays an essential role in the assembly of succinate dehydrogenase (SDH), an enzyme complex (also referred to as respiratory complex II) that is a component of both the tricarboxylic acid (TCA) cycle and the mitochondrial electron transport chain, and which couples the oxidation of succinate to fumarate with the reduction of ubiquinone (coenzyme Q) to ubiquinol. Required for flavinylation (covalent attachment of FAD) of the flavoprotein subunit of the SDH catalytic dimer. This chain is Succinate dehydrogenase assembly factor 2, mitochondrial, found in Mycosarcoma maydis (Corn smut fungus).